The chain runs to 415 residues: 6-phospho-beta-glucosidase BglT (415 aa).

1–64 (MRIAVIGGGS…DRFKVLISDT (64 aa)) provides a ligand contact to NAD(+). Arginine 87 and asparagine 140 together coordinate substrate. Cysteine 162 is a binding site for Mn(2+). Asparagine 163 contributes to the substrate binding site. Histidine 192 is a binding site for Mn(2+). Tyrosine 241 functions as the Proton acceptor in the catalytic mechanism. Position 261 (arginine 261) interacts with substrate.

Belongs to the glycosyl hydrolase 4 family. Homodimer or homotetramer. Exists in a homodimer/homotetramer equilibrium state in solution. Requires NAD(+) as cofactor. It depends on Mn(2+) as a cofactor.

It catalyses the reaction 6-phospho-beta-D-glucosyl-(1-&gt;4)-D-glucose + H2O = D-glucose 6-phosphate + D-glucose. In terms of biological role, hydrolyzes cellobiose 6'-phosphate into glucose 6-phosphate (Glc6P) and glucose. This is 6-phospho-beta-glucosidase BglT (bglT) from Thermotoga maritima (strain ATCC 43589 / DSM 3109 / JCM 10099 / NBRC 100826 / MSB8).